A 513-amino-acid polypeptide reads, in one-letter code: Sucrose transport protein SUC1 (513 aa).

A compositionally biased stretch (basic and acidic residues) spans 1-11 (MGAYETEKPTK). Residues 1–26 (MGAYETEKPTKDAAALETQSPEDFDQ) form a disordered region. The Cytoplasmic segment spans residues 1 to 32 (MGAYETEKPTKDAAALETQSPEDFDQPSPLRK). Ser-20 is subject to Phosphoserine. A helical membrane pass occupies residues 33 to 53 (IISVASIAAGVQFGWALQLSL). Residues 54 to 67 (LTPYVQLLGIPHKW) are Extracellular-facing. The chain crosses the membrane as a helical span at residues 68 to 88 (SSLIWLCGPVSGMIVQPIVGF). Residues 89-101 (HSDRCRSKFGRRR) are Cytoplasmic-facing. A helical membrane pass occupies residues 102–122 (PFIATGAALVAVAVFLIGYAA). Topologically, residues 123–139 (DFGYKMGDKLEEKVKVR) are extracellular. A helical membrane pass occupies residues 140–160 (AIGIFALGFWILDVANNTLQG). Residues 161-178 (PCRAFLADLAAGDAKRTR) are Cytoplasmic-facing. The chain crosses the membrane as a helical span at residues 179 to 199 (VANAFFSFFMAVGNVLGYAAG). The Extracellular segment spans residues 200–224 (SYTNLHKMFPFTMTKACDIYCANLK). A helical transmembrane segment spans residues 225 to 245 (TCFFLSITLLLIVTVTSLWYV). The Cytoplasmic portion of the chain corresponds to 246–282 (NDKQWSPPPRNADDDEKTSSVPLFGEIFGAFKVMKRP). A helical transmembrane segment spans residues 283–303 (MWMLLIVTALNWIAWFPFLLF). Over 304-334 (DTDWMGREVFGGDSDGNERSKKLYSLGVQSG) the chain is Extracellular. The helical transmembrane segment at 335–355 (AMGLMFNSIVLGFMSLGVEWI) threads the bilayer. The Cytoplasmic segment spans residues 356 to 365 (GRKLGGAKRL). Residues 366 to 386 (WGIVNFILAAGLAMTVLVTKF) traverse the membrane as a helical segment. Residues 387–408 (AEDHRKTAGDLAGPSASVKAGA) lie on the Extracellular side of the membrane. Residues 409-429 (LSLFAVLGIPLAITFSTPFAL) form a helical membrane-spanning segment. Residues 430–441 (ASIFSSCSGAGQ) lie on the Cytoplasmic side of the membrane. Residues 442-462 (GLSLGVLNLAIVIPQMIVSLG) traverse the membrane as a helical segment. The Extracellular segment spans residues 463–474 (GGPFDALFGGGN). A helical membrane pass occupies residues 475–495 (LPAFIVAAIAAAISGVLALTV). Topologically, residues 496-513 (LPSPPPDAPKATTMGGFH) are cytoplasmic.

The protein belongs to the glycoside-pentoside-hexuronide (GPH) cation symporter transporter (TC 2.A.2.4) family. As to expression, expressed in flowers (at protein level). Highly expressed in pollen. Expressed in pollen tubes and root vascular cylinder, pericycle and endodermis.

Its subcellular location is the membrane. It catalyses the reaction sucrose(out) + H(+)(out) = sucrose(in) + H(+)(in). It functions in the pathway glycan biosynthesis; sucrose metabolism. Inhibited by DEPC, protonophores (e.g. dinitrophenol and carbonyl cyanide m-chlorophenyl-hydrazone (CCCP)), and SH group inhibitors (e.g. N-ethylmaleimide (NEM) and p-chloromercuriphenyl sulphonic acid (PCMPS)). Responsible for the transport of sucrose into the cell, with the concomitant uptake of protons (symport system). This transport is both voltage- and energy-dependent. Can also transport other glucosides such as maltose, alpha-phenylglucoside and beta-phenylglucoside. May also transport biotin. Required for normal pollen germination and anthocyanin accumulation induced by sucrose. In Arabidopsis thaliana (Mouse-ear cress), this protein is Sucrose transport protein SUC1.